The primary structure comprises 151 residues: Endoribonuclease YbeY (151 aa).

Residues His-113, His-117, and His-123 each coordinate Zn(2+).

Belongs to the endoribonuclease YbeY family. Requires Zn(2+) as cofactor.

It is found in the cytoplasm. Functionally, single strand-specific metallo-endoribonuclease involved in late-stage 70S ribosome quality control and in maturation of the 3' terminus of the 16S rRNA. The chain is Endoribonuclease YbeY from Polaromonas naphthalenivorans (strain CJ2).